A 176-amino-acid chain; its full sequence is Inorganic pyrophosphatase (176 aa).

The substrate site is built by K30, R44, and Y56. Residues D66, D71, and D103 each contribute to the Mg(2+) site. Y142 is a substrate binding site.

Belongs to the PPase family. As to quaternary structure, homohexamer. Mg(2+) is required as a cofactor.

The protein localises to the cytoplasm. It carries out the reaction diphosphate + H2O = 2 phosphate + H(+). Functionally, catalyzes the hydrolysis of inorganic pyrophosphate (PPi) forming two phosphate ions. In Salmonella typhi, this protein is Inorganic pyrophosphatase.